A 787-amino-acid polypeptide reads, in one-letter code: Pleckstrin homology domain-containing family G member 6 (787 aa).

A DH domain is found at 161–353; sequence HQQEALWELL…ESFLRHINGQ (193 aa). In terms of domain architecture, PH spans 409–509; that stretch reads QLLLEGPVRV…WLEKTQHAQT (101 aa). The tract at residues 533 to 762 is disordered; it reads QGTESPSTRP…EPGNGKPRRL (230 aa). Positions 535–557 are enriched in low complexity; that stretch reads TESPSTRPSTPSPSPEDSQSSAE. A compositionally biased stretch (basic and acidic residues) spans 724–742; the sequence is LRPRSLREDMLREIREELA.

As to quaternary structure, interacts with MYH10. Interacts with ELMO1 and EZR (in an open conformation). Interacts with CSPP1.

The protein resides in the cell projection. The protein localises to the microvillus. Its subcellular location is the cytoplasm. It is found in the cytoskeleton. It localises to the spindle. The protein resides in the cleavage furrow. Its function is as follows. Guanine nucleotide exchange factor activating the small GTPase RHOA, which, in turn, induces myosin filament formation. Also activates RHOG. Does not activate RAC1, or to a much lower extent than RHOA and RHOG. Part of a functional unit, involving PLEKHG6, MYH10 and RHOA, at the cleavage furrow to advance furrow ingression during cytokinesis. In epithelial cells, required for the formation of microvilli and membrane ruffles on the apical pole. Along with EZR, required for normal macropinocytosis. The sequence is that of Pleckstrin homology domain-containing family G member 6 (Plekhg6) from Mus musculus (Mouse).